Here is a 454-residue protein sequence, read N- to C-terminus: Mitochondrial dynamics protein MID49 (454 aa).

At 1 to 22 the chain is on the mitochondrial intermembrane side; that stretch reads MAEFSQKRGKRRSDEGLGSMVD. Ser-13 carries the post-translational modification Phosphoserine. A helical transmembrane segment spans residues 23–43; sequence FLLANARLVLGVGGAAVLGIA. Topologically, residues 44 to 454 are cytoplasmic; sequence TLAVKRFIDR…SGLQEPEGLL (411 aa). The segment at 76–119 is disordered; sequence ATPHLQPRPPPAALSQPVLPLAPSSSAPEGPAETDPEVTPQLSS. Over residues 88-103 the composition is skewed to low complexity; sequence ALSQPVLPLAPSSSAP.

The protein belongs to the MID49/MID51 family. As to quaternary structure, interacts with DNM1L. As to expression, expressed in all tissues tested with highest expression in heart and skeletal muscle.

It localises to the mitochondrion outer membrane. Functionally, mitochondrial outer membrane protein involved in the regulation of mitochondrial organization. It is required for mitochondrial fission and promotes the recruitment and association of the fission mediator dynamin-related protein 1 (DNM1L) to the mitochondrial surface independently of the mitochondrial fission FIS1 and MFF proteins. Regulates DNM1L GTPase activity. This is Mitochondrial dynamics protein MID49 (MIEF2) from Homo sapiens (Human).